Consider the following 775-residue polypeptide: Melanoma-associated antigen D1 (775 aa).

A disordered region spans residues 37 to 330 (SEAPPTSQAT…PARQTPSAWQ (294 aa)). Positions 39 to 50 (APPTSQATAAAS) are enriched in low complexity. 6 stretches are compositionally biased toward polar residues: residues 52-63 (PNASPQSSQPPT), 84-100 (KAQN…SQAR), 150-180 (GQNT…NQPK), 223-237 (AQTS…NVES), 250-260 (NNLNVEENSNG), and 297-330 (LAWQ…SAWQ). 19 consecutive repeat copies span residues 293–298 (WQTPLA), 299–304 (WQNPSG), 305–310 (WQNQTA), 329–334 (WQNPVA), 335–340 (WQNPVI), 341–346 (WPNPVI), 347–352 (WQNPVI), 353–358 (WPNPIV), 359–364 (WPGPIV), 365–370 (WPNPMA), 371–376 (WQSTPG), 377–382 (WQSPPS), 383–388 (WQAPPS), 389–394 (WQSPQD), 395–400 (WQGPPD), 401–406 (WQLPPD), 407–412 (WSMPPD), 413–418 (WSFPSD), and 419–424 (WPFPPD). Positions 293–441 (WQTPLAWQNP…IPPDWQNLRP (149 aa)) are 22 X 6 AA tandem repeats of W-[PQ]-X-P-X-X. The segment at 374–407 (TPGWQSPPSWQAPPSWQSPQDWQGPPDWQLPPDW) is disordered. The segment covering 375 to 406 (PGWQSPPSWQAPPSWQSPQDWQGPPDWQLPPD) has biased composition (low complexity). A 20; approximate repeat occupies 425–429 (WIPAD). Repeat copies occupy residues 430–435 (WPIPPD) and 436–441 (WQNLRP). Low complexity predominate over residues 437–452 (QNLRPSPNLRSSPNSR). The tract at residues 437–463 (QNLRPSPNLRSSPNSRASQNQGPPQPR) is disordered. The region spanning 468 to 666 (LQERANKLVK…RDWTAQFMEA (199 aa)) is the MAGE domain.

Interacts with DLX5, DLX7 and MSX2 and forms homomultimers. Interacts with UNC5A. Interacts with TRIM28 and PJA1. Interacts with NGFR/p75NTR and RORA. Ubiquitous and in the seminiferous tubules expressed in Sertoli cells but not in germ cells. Expression decreases in all tissues with increased age and is detectable only in brain cortex and lung.

It localises to the cytoplasm. It is found in the cell membrane. Its subcellular location is the nucleus. Functionally, involved in the apoptotic response after nerve growth factor (NGF) binding in neuronal cells. Inhibits cell cycle progression, and facilitates NGFR-mediated apoptosis. May act as a regulator of the function of DLX family members. May enhance ubiquitin ligase activity of RING-type zinc finger-containing E3 ubiquitin-protein ligases. Proposed to act through recruitment and/or stabilization of the Ubl-conjugating enzyme (E2) at the E3:substrate complex. Plays a role in the circadian rhythm regulation. May act as RORA co-regulator, modulating the expression of core clock genes such as BMAL1 and NFIL3, induced, or NR1D1, repressed. The polypeptide is Melanoma-associated antigen D1 (Maged1) (Rattus norvegicus (Rat)).